We begin with the raw amino-acid sequence, 209 residues long: A-type ATP synthase subunit D (209 aa).

Belongs to the V-ATPase D subunit family. Has multiple subunits with at least A(3), B(3), C, D, E, F, H, I and proteolipid K(x).

The protein resides in the cell membrane. Its function is as follows. Component of the A-type ATP synthase that produces ATP from ADP in the presence of a proton gradient across the membrane. The chain is A-type ATP synthase subunit D from Methanosarcina acetivorans (strain ATCC 35395 / DSM 2834 / JCM 12185 / C2A).